The following is a 264-amino-acid chain: Hemin import ATP-binding protein HmuV (264 aa).

One can recognise an ABC transporter domain in the interval 2 to 241; sequence IEVSGLSVRL…ATMLSVFGCA (240 aa). 34-41 is an ATP binding site; the sequence is GPNGSGKT.

The protein belongs to the ABC transporter superfamily. Heme (hemin) importer (TC 3.A.1.14.5) family. The complex is composed of two ATP-binding proteins (HmuV), two transmembrane proteins (HmuU) and a solute-binding protein (HmuT).

Its subcellular location is the cell inner membrane. In terms of biological role, part of the ABC transporter complex HmuTUV involved in hemin import. Responsible for energy coupling to the transport system. This chain is Hemin import ATP-binding protein HmuV, found in Rhizobium etli (strain ATCC 51251 / DSM 11541 / JCM 21823 / NBRC 15573 / CFN 42).